The chain runs to 133 residues: Small ribosomal subunit protein eS8 (133 aa).

Residues 1–31 (MGFYQGPDNRKITGGLKGKHRDKRKYEIGNP) form a disordered region.

Belongs to the eukaryotic ribosomal protein eS8 family. As to quaternary structure, part of the 30S ribosomal subunit.

The sequence is that of Small ribosomal subunit protein eS8 from Saccharolobus solfataricus (strain ATCC 35092 / DSM 1617 / JCM 11322 / P2) (Sulfolobus solfataricus).